The primary structure comprises 693 residues: Sulfite reductase 1 [ferredoxin], chloroplastic (693 aa).

Residues 1–62 (MTTSFGAAIN…PSSIVRAVST (62 aa)) constitute a chloroplast transit peptide. C502, C508, C548, and C552 together coordinate [4Fe-4S] cluster. C552 contacts siroheme.

It belongs to the nitrite and sulfite reductase 4Fe-4S domain family. As to quaternary structure, monomer. Interacts with ferredoxin. It depends on siroheme as a cofactor. [4Fe-4S] cluster is required as a cofactor. In terms of processing, phosphorylated; this phosphorylation reduces DNA-binding. In terms of tissue distribution, expressed in leaves, stems, roots and petals.

It localises to the plastid. The protein localises to the chloroplast stroma. It is found in the chloroplast nucleoid. The protein resides in the plastid stroma. The enzyme catalyses hydrogen sulfide + 6 oxidized [2Fe-2S]-[ferredoxin] + 3 H2O = sulfite + 6 reduced [2Fe-2S]-[ferredoxin] + 7 H(+). Its function is as follows. Essential protein with sulfite reductase activity required in assimilatory sulfate reduction pathway during both primary and secondary metabolism and thus involved in development and growth. DNA-binding protein that binds to both double-stranded and single-stranded DNA without significant sequence specificity to reversibly repress the transcriptional activity of chloroplast nucleoids by promoting DNA compaction and possibly regulate DNA replication. This chain is Sulfite reductase 1 [ferredoxin], chloroplastic (SIR1), found in Nicotiana tabacum (Common tobacco).